A 95-amino-acid chain; its full sequence is Late cornified envelope protein 3B (95 aa).

Residues 1 to 13 (MSCQQNQQQCQPL) show a composition bias toward low complexity. 2 disordered regions span residues 1-29 (MSCQQNQQQCQPLPKCPSPKCPPKSSAQC) and 68-95 (RQSSNSCDRGSGQQDGASDCGYGSGGCC).

It belongs to the LCE family. Skin-specific. Expression was readily detected in adult trunk skin, adult arm skin, fetal skin, penal skin, vulva, esophagus and tongue. Not expressed in the cervix, rectum, lung, colon, or placenta.

Functionally, a structural component of the cornified envelope of the stratum corneum involved in innate cutaneous host defense. Possesses defensin-like antimicrobial activity against a broad spectrum of Gram-positive and Gram-negative bacteria, both aerobic and anaerobic species. Upon inflammation, may regulate skin barrier repair by shaping cutaneous microbiota composition and immune response to bacterial antigens. In Homo sapiens (Human), this protein is Late cornified envelope protein 3B.